A 315-amino-acid polypeptide reads, in one-letter code: Large ribosomal subunit protein uL29m (315 aa).

Belongs to the universal ribosomal protein uL29 family. As to quaternary structure, component of the mitochondrial large ribosomal subunit. Mature mitochondrial ribosomes consist of a small (37S) and a large (54S) subunit. The 37S subunit contains at least 33 different proteins and 1 molecule of RNA (15S). The 54S subunit contains at least 45 different proteins and 1 molecule of RNA (21S).

Its subcellular location is the mitochondrion. The polypeptide is Large ribosomal subunit protein uL29m (MRPL4) (Candida glabrata (strain ATCC 2001 / BCRC 20586 / JCM 3761 / NBRC 0622 / NRRL Y-65 / CBS 138) (Yeast)).